Here is a 245-residue protein sequence, read N- to C-terminus: 1-(5-phosphoribosyl)-5-[(5-phosphoribosylamino)methylideneamino] imidazole-4-carboxamide isomerase (245 aa).

Residue Asp-7 is the Proton acceptor of the active site. Asp-129 (proton donor) is an active-site residue.

Belongs to the HisA/HisF family.

It is found in the cytoplasm. The catalysed reaction is 1-(5-phospho-beta-D-ribosyl)-5-[(5-phospho-beta-D-ribosylamino)methylideneamino]imidazole-4-carboxamide = 5-[(5-phospho-1-deoxy-D-ribulos-1-ylimino)methylamino]-1-(5-phospho-beta-D-ribosyl)imidazole-4-carboxamide. It participates in amino-acid biosynthesis; L-histidine biosynthesis; L-histidine from 5-phospho-alpha-D-ribose 1-diphosphate: step 4/9. The polypeptide is 1-(5-phosphoribosyl)-5-[(5-phosphoribosylamino)methylideneamino] imidazole-4-carboxamide isomerase (Shewanella loihica (strain ATCC BAA-1088 / PV-4)).